Consider the following 101-residue polypeptide: Protein mes1 (101 aa).

Residues 1-19 (MVNTDNKENEPPNMEKAHM) are compositionally biased toward basic and acidic residues. Positions 1-101 (MVNTDNKENE…RSPNPLLSMR (101 aa)) are disordered.

As to quaternary structure, interacts with slp1.

Its subcellular location is the cytoplasm. The protein resides in the nucleus. Functionally, specifically required for meiosis II (MII). Binds to slp1, an activator of the anapahase promoting complex/cyclcosome (APC/C), and counteracts its function in promoting proteolysis of cdc13. By suppressing the degradation of cdc13 at anaphase I this protein may help maintain a sufficient level of cdc2 kinase activity to complete MII. This Schizosaccharomyces pombe (strain 972 / ATCC 24843) (Fission yeast) protein is Protein mes1 (mes1).